A 93-amino-acid polypeptide reads, in one-letter code: Large ribosomal subunit protein uL23 (93 aa).

This sequence belongs to the universal ribosomal protein uL23 family. As to quaternary structure, part of the 50S ribosomal subunit. Contacts protein L29, and trigger factor when it is bound to the ribosome.

One of the early assembly proteins it binds 23S rRNA. One of the proteins that surrounds the polypeptide exit tunnel on the outside of the ribosome. Forms the main docking site for trigger factor binding to the ribosome. The chain is Large ribosomal subunit protein uL23 from Campylobacter jejuni subsp. doylei (strain ATCC BAA-1458 / RM4099 / 269.97).